The chain runs to 243 residues: Homeobox protein goosecoid isoform B (243 aa).

Positions 148–207 (KRRHRTIFTDEQLEALENLFQETKYPDVGTREQLARRVHLREEKVEVWFKNRRAKWRRQK) form a DNA-binding region, homeobox. The disordered stretch occupies residues 201–243 (AKWRRQKRSSSEESENAQKWNKSSKNSAEKRDEQAKSDLDSDS). Positions 217 to 226 (AQKWNKSSKN) are enriched in polar residues. Residues 227 to 243 (SAEKRDEQAKSDLDSDS) show a composition bias toward basic and acidic residues.

The protein belongs to the paired homeobox family. Bicoid subfamily.

It localises to the nucleus. Its function is as follows. Plays a central role in executing Spemann's organizer phenomenon (the dorsal blastopore lip of the early Xenopus laevis gastrula can organize a complete secondary body axis when transplanted to another embryo). This chain is Homeobox protein goosecoid isoform B (gsc-b), found in Xenopus laevis (African clawed frog).